The primary structure comprises 153 residues: Probable histone H2A.2 (153 aa).

Disordered stretches follow at residues 1-24 and 127-153; these read MDAS…KKSV and KKTE…PKKA. Residues 127–141 are compositionally biased toward basic and acidic residues; that stretch reads KKTERSNTVSKEPKS. Residues 142–153 are compositionally biased toward basic residues; sequence PKPKAGKSPKKA. The SPKK motif motif lies at 149–152; sequence SPKK.

It belongs to the histone H2A family. The nucleosome is a histone octamer containing two molecules each of H2A, H2B, H3 and H4 assembled in one H3-H4 heterotetramer and two H2A-H2B heterodimers. The octamer wraps approximately 147 bp of DNA.

It localises to the nucleus. Its subcellular location is the chromosome. Core component of nucleosome. Nucleosomes wrap and compact DNA into chromatin, limiting DNA accessibility to the cellular machineries which require DNA as a template. Histones thereby play a central role in transcription regulation, DNA repair, DNA replication and chromosomal stability. DNA accessibility is regulated via a complex set of post-translational modifications of histones, also called histone code, and nucleosome remodeling. This is Probable histone H2A.2 from Medicago truncatula (Barrel medic).